Here is a 222-residue protein sequence, read N- to C-terminus: Endonuclease V (222 aa).

The Mg(2+) site is built by D34 and D102.

It belongs to the endonuclease V family. The cofactor is Mg(2+).

It localises to the cytoplasm. It carries out the reaction Endonucleolytic cleavage at apurinic or apyrimidinic sites to products with a 5'-phosphate.. In terms of biological role, DNA repair enzyme involved in the repair of deaminated bases. Selectively cleaves double-stranded DNA at the second phosphodiester bond 3' to a deoxyinosine leaving behind the intact lesion on the nicked DNA. The sequence is that of Endonuclease V from Photorhabdus laumondii subsp. laumondii (strain DSM 15139 / CIP 105565 / TT01) (Photorhabdus luminescens subsp. laumondii).